A 285-amino-acid polypeptide reads, in one-letter code: MKYIGAHVSAAGGLANAPARAAEIGATAFALFTKNQRQWRAAPLIPQVIDDFKIACEKYHFSAAQILPHDSYLINLGHPVSEALEKSRDAFLDEMQRCEQLGLTLLNFHPGSHLMQIAQEDCLARIAESINIALAQTEGVTAVIENTAGQGSNLGFEFEQLAAIIDGVEDKSRVGVCIDTCHAFAAGYDLRTPEACEKTFAEFGQIVGFQYLRGMHLNDAKSAFGSRVDRHHSLGEGNIGHDAFRWIMQDARFDGIPLVLETINPDIWAEEIAWLKAQQSEKAVA.

Zn(2+) contacts are provided by histidine 69, histidine 109, glutamate 145, aspartate 179, histidine 182, histidine 216, aspartate 229, histidine 231, and glutamate 261.

It belongs to the AP endonuclease 2 family. Zn(2+) is required as a cofactor.

The enzyme catalyses Endonucleolytic cleavage to 5'-phosphooligonucleotide end-products.. Its function is as follows. Endonuclease IV plays a role in DNA repair. It cleaves phosphodiester bonds at apurinic or apyrimidinic (AP) sites, generating a 3'-hydroxyl group and a 5'-terminal sugar phosphate. In Salmonella arizonae (strain ATCC BAA-731 / CDC346-86 / RSK2980), this protein is Probable endonuclease 4.